The chain runs to 464 residues: Cell division protein FtsA (464 aa).

Positions 392-464 (EVIESDKDSE…FKKLMKSLFE (73 aa)) are disordered. Over residues 416-455 (KKENDEVAPEAPREESYEDRENHLEDEQQTEGKAKEESKF) the composition is skewed to basic and acidic residues.

It belongs to the FtsA/MreB family. As to quaternary structure, self-interacts. Interacts with FtsZ.

Its subcellular location is the cell membrane. Its function is as follows. Cell division protein that is involved in the assembly of the Z ring. May serve as a membrane anchor for the Z ring. The protein is Cell division protein FtsA of Staphylococcus epidermidis (strain ATCC 35984 / DSM 28319 / BCRC 17069 / CCUG 31568 / BM 3577 / RP62A).